The primary structure comprises 612 residues: Peroxisomal carnitine O-octanoyltransferase (612 aa).

N-acetylmethionine is present on Met1. N6-succinyllysine is present on residues Lys40 and Lys57. His327 functions as the Proton acceptor in the catalytic mechanism. Residues Lys406 and 410 to 417 (KKEALHPD) each bind CoA. Lys406 is subject to N6-acetyllysine; alternate. At Lys406 the chain carries N6-succinyllysine; alternate. Tyr439, Thr441, and Thr452 together coordinate (R)-carnitine. Residues 610–612 (AHL) carry the Microbody targeting signal motif.

Belongs to the carnitine/choline acetyltransferase family. As to expression, liver.

It is found in the peroxisome. The enzyme catalyses octanoyl-CoA + (R)-carnitine = O-octanoyl-(R)-carnitine + CoA. The catalysed reaction is 4,8-dimethylnonanoyl-CoA + (R)-carnitine = O-4,8-dimethylnonanoyl-(R)-carnitine + CoA. Its pathway is lipid metabolism; fatty acid beta-oxidation. Beta-oxidation of fatty acids. The highest activity concerns the C6 to C10 chain length substrate. In Rattus norvegicus (Rat), this protein is Peroxisomal carnitine O-octanoyltransferase (Crot).